Consider the following 291-residue polypeptide: Small ribosomal subunit biogenesis GTPase RsgA (291 aa).

Residues 63–221 form the CP-type G domain; that stretch reads KNEIKRPPVS…IADTPGFSAL (159 aa). GTP-binding positions include 112 to 115 and 164 to 172; these read TKKD and GQSGVGKST. The Zn(2+) site is built by Cys-245, Cys-250, His-252, and Cys-258.

Belongs to the TRAFAC class YlqF/YawG GTPase family. RsgA subfamily. In terms of assembly, monomer. Associates with 30S ribosomal subunit, binds 16S rRNA. Requires Zn(2+) as cofactor.

The protein localises to the cytoplasm. One of several proteins that assist in the late maturation steps of the functional core of the 30S ribosomal subunit. Helps release RbfA from mature subunits. May play a role in the assembly of ribosomal proteins into the subunit. Circularly permuted GTPase that catalyzes slow GTP hydrolysis, GTPase activity is stimulated by the 30S ribosomal subunit. This Staphylococcus saprophyticus subsp. saprophyticus (strain ATCC 15305 / DSM 20229 / NCIMB 8711 / NCTC 7292 / S-41) protein is Small ribosomal subunit biogenesis GTPase RsgA.